The following is a 179-amino-acid chain: Probable chemoreceptor glutamine deamidase CheD 2 (179 aa).

It belongs to the CheD family.

It catalyses the reaction L-glutaminyl-[protein] + H2O = L-glutamyl-[protein] + NH4(+). Its function is as follows. Probably deamidates glutamine residues to glutamate on methyl-accepting chemotaxis receptors (MCPs), playing an important role in chemotaxis. This Ruegeria sp. (strain TM1040) (Silicibacter sp.) protein is Probable chemoreceptor glutamine deamidase CheD 2.